Reading from the N-terminus, the 55-residue chain is Small polypeptide DEVIL 10 (55 aa).

The N-linked (GlcNAc...) asparagine glycan is linked to Asn7. The required for DVL/RTFL small polypeptide activity stretch occupies residues 19 to 50 (RFGDRCLLMAKQQRTRLYILRRCVSMLLCWHD). A helical membrane pass occupies residues 32–48 (RTRLYILRRCVSMLLCW).

Belongs to the DVL/RTFL small polypeptides family.

The protein resides in the cell membrane. Its function is as follows. Small polypeptide acting as a regulatory molecule which coordinates cellular responses required for differentiation, growth and development, probably by restricting polar cell proliferation in lateral organs and coordinating socket cell recruitment and differentiation at trichome sites. The sequence is that of Small polypeptide DEVIL 10 from Arabidopsis thaliana (Mouse-ear cress).